A 375-amino-acid polypeptide reads, in one-letter code: Actin (375 aa).

The protein belongs to the actin family.

It is found in the cytoplasm. The protein localises to the cytoskeleton. It catalyses the reaction ATP + H2O = ADP + phosphate + H(+). Its function is as follows. Actins are highly conserved proteins that are involved in various types of cell motility and are ubiquitously expressed in all eukaryotic cells. The polypeptide is Actin (Giardia intestinalis (Giardia lamblia)).